The following is a 179-amino-acid chain: Large ribosomal subunit protein uL5 (179 aa).

Belongs to the universal ribosomal protein uL5 family. Part of the 50S ribosomal subunit; part of the 5S rRNA/L5/L18/L25 subcomplex. Contacts the 5S rRNA and the P site tRNA. Forms a bridge to the 30S subunit in the 70S ribosome.

This is one of the proteins that bind and probably mediate the attachment of the 5S RNA into the large ribosomal subunit, where it forms part of the central protuberance. In the 70S ribosome it contacts protein S13 of the 30S subunit (bridge B1b), connecting the 2 subunits; this bridge is implicated in subunit movement. Contacts the P site tRNA; the 5S rRNA and some of its associated proteins might help stabilize positioning of ribosome-bound tRNAs. The protein is Large ribosomal subunit protein uL5 of Exiguobacterium sp. (strain ATCC BAA-1283 / AT1b).